The chain runs to 102 residues: Small ribosomal subunit protein uS10 (102 aa).

Belongs to the universal ribosomal protein uS10 family. Part of the 30S ribosomal subunit.

Functionally, involved in the binding of tRNA to the ribosomes. In Syntrophotalea carbinolica (strain DSM 2380 / NBRC 103641 / GraBd1) (Pelobacter carbinolicus), this protein is Small ribosomal subunit protein uS10.